A 159-amino-acid polypeptide reads, in one-letter code: Anaerobic nitrite reductase HB2 (159 aa).

The 151-residue stretch at 2–152 (GFTEKQEGLV…LAEAIKAEMK (151 aa)) folds into the Globin domain. A Homodimerization motif is present at residues 35 to 39 (EIAPG). 4 residues coordinate heme b: Ser-45, Lys-59, His-63, and His-98. Positions 105–117 (DPHFEVVKEALLR) match the Homodimerization motif.

It belongs to the plant globin family. Homodimer. Heme b serves as cofactor.

The protein localises to the cytoplasm. The protein resides in the nucleus. It carries out the reaction Fe(III)-heme b-[protein] + nitric oxide + H2O = Fe(II)-heme b-[protein] + nitrite + 2 H(+). Phytoglobin that reduces nitrite to nitric oxide (NO) under anoxic conditions (e.g. during flooding or in waterlogged soil). May not function as an oxygen storage or transport protein. Has an unusually high affinity for O(2) through an hexacoordinate heme iron because of a very low dissociation constant. The chain is Anaerobic nitrite reductase HB2 from Gossypium hirsutum (Upland cotton).